We begin with the raw amino-acid sequence, 83 residues long: uncharacterized protein (83 aa).

The chain crosses the membrane as a helical span at residues 50–70 (IMVFLGEAWIILIPFAIFCII).

It belongs to the plectrovirus ORF7 family.

The protein resides in the host membrane. This is an uncharacterized protein from Spiroplasma melliferum (SpV1).